A 72-amino-acid polypeptide reads, in one-letter code: Translation initiation factor IF-1 (72 aa).

The S1-like domain occupies 1 to 72; the sequence is MAKEDCIEME…TKGRIKFRSK (72 aa).

It belongs to the IF-1 family. In terms of assembly, component of the 30S ribosomal translation pre-initiation complex which assembles on the 30S ribosome in the order IF-2 and IF-3, IF-1 and N-formylmethionyl-tRNA(fMet); mRNA recruitment can occur at any time during PIC assembly.

It is found in the cytoplasm. In terms of biological role, one of the essential components for the initiation of protein synthesis. Stabilizes the binding of IF-2 and IF-3 on the 30S subunit to which N-formylmethionyl-tRNA(fMet) subsequently binds. Helps modulate mRNA selection, yielding the 30S pre-initiation complex (PIC). Upon addition of the 50S ribosomal subunit IF-1, IF-2 and IF-3 are released leaving the mature 70S translation initiation complex. The protein is Translation initiation factor IF-1 of Francisella tularensis subsp. tularensis (strain WY96-3418).